Here is a 567-residue protein sequence, read N- to C-terminus: uncharacterized protein (567 aa).

The segment at 1 to 26 (MPSEKATTRHLPGAVETLSPRTGRRP) is disordered. 6 helical membrane-spanning segments follow: residues 57–77 (AILV…TVAF), 90–110 (VSFG…TYWL), 142–162 (VALA…IIYG), 173–193 (LFSM…LTEF), 221–241 (MLVW…TAIF), and 257–277 (VLIL…ILAW). Residues 278 to 329 (LTATPVRVVREALNRVEQGDLSGDLVVFDGTELGELQRGFNRMVEGLRERER) form the HAMP domain. The Guanylate cyclase domain maps to 361 to 485 (AVVFVDIVGS…EPVNEAARLC (125 aa)).

This sequence belongs to the adenylyl cyclase class-3 family.

It localises to the cell membrane. This is an uncharacterized protein from Mycobacterium tuberculosis (strain ATCC 25618 / H37Rv).